A 67-amino-acid chain; its full sequence is Probable Sec-independent protein translocase protein TatE (67 aa).

A helical membrane pass occupies residues 4–21; that stretch reads ISITKLLVIAALVVLLFG. A disordered region spans residues 44-67; the sequence is NDDDTGAKTPAASEAPAERLSHKE.

It belongs to the TatA/E family. TatE subfamily.

It is found in the cell inner membrane. In terms of biological role, part of the twin-arginine translocation (Tat) system that transports large folded proteins containing a characteristic twin-arginine motif in their signal peptide across membranes. TatE shares overlapping functions with TatA. This is Probable Sec-independent protein translocase protein TatE from Cronobacter sakazakii (strain ATCC BAA-894) (Enterobacter sakazakii).